Reading from the N-terminus, the 154-residue chain is Pro-corazonin (154 aa).

An N-terminal signal peptide occupies residues 1 to 19 (MLRLLLLPLFLFTLSMCMG). Pyrrolidone carboxylic acid is present on Q20. N30 is subject to Asparagine amide. Positions 70–154 (LERCLSQLQR…SAEPNVFGKH (85 aa)) are excised as a propeptide. Residues 91–119 (DFNANRVDPDPENSAHPRLSNSNGENVLY) are disordered. The segment covering 109 to 119 (LSNSNGENVLY) has biased composition (polar residues).

This sequence belongs to the corazonin family. As to expression, from late embryo to larva, expression is consistently detected in three neuronal groups: dorso-lateral neurons (DL), dorso-medial neurons (DM), and neurons in the ventral nerve cord (vCrz). Both the vCrz and DM groups die via programmed cell death during metamorphosis, whereas the DL neurons persist to adulthood. In adults, expression is seen in a cluster of six to eight neurons per lobe in the pars lateralis (DLP), in numerous neuronal cells in the optic lobes, and in a novel group of four abdominal ganglionic neurons present only in males (ms-aCrz). Projections of the ms-aCrz neurons terminate within the ventral nerve cord, implying a role as interneurons. Terminals of the DLP neurons are found in the retrocerebral complex that produces juvenile hormone and adipokinetic hormone, located in the vicinity of terminals emanating from PDF-containing pacemaking neurons.

It is found in the secreted. Functionally, cardioactive peptide. Corazonin is probably involved in the physiological regulation of the heart beat. Clock (Clk) and cycle (cyc) proteins negatively regulate Crz transcription in a cell-specific manner. In Drosophila melanogaster (Fruit fly), this protein is Pro-corazonin (Crz).